The chain runs to 37 residues: Peptide encoded by miPEP164a (37 aa).

Functionally, regulatory peptide encoded by the primary transcript (pri-miR164a) of the microRNA miR164a that enhances the accumulation of its corresponding mature miRNA. Acts probably as a transcriptional activator of its corresponding pri-miRNA. This is Peptide encoded by miPEP164a from Arabidopsis thaliana (Mouse-ear cress).